Reading from the N-terminus, the 230-residue chain is Protein CbbY (230 aa).

Aspartate 8 functions as the Nucleophile in the catalytic mechanism. 2 residues coordinate Mg(2+): aspartate 8 and aspartate 10. Aspartate 8 contacts substrate. Aspartate 10 acts as the Proton donor in catalysis. Residues glutamate 17, 50–54 (GGKER), 75–78 (HRAK), and 115–121 (TTTSLPN) each bind substrate. Aspartate 176 is a Mg(2+) binding site.

The protein belongs to the HAD-like hydrolase superfamily. CbbY/CbbZ/Gph/YieH family. Requires Mg(2+) as cofactor.

The enzyme catalyses D-xylulose 1,5-bisphosphate + H2O = D-xylulose 5-phosphate + phosphate. Highly selective xylulose-1,5-bisphosphate (XuBP) phosphatase. Also shows activity towards ribulose-1,5-bisphosphate (RuBP) and fructose-1,6-bisphosphate (FBP), but not towards fructose-6-phosphate (F6P) or ribulose-5-phosphate (Ru5P). Degrades xylulose-1,5-bisphosphate, a potent inhibitor of rubisco produced by the rubisco itself. The sequence is that of Protein CbbY from Cereibacter sphaeroides (Rhodobacter sphaeroides).